Here is a 184-residue protein sequence, read N- to C-terminus: Inactive ribonuclease-like protein 9 (184 aa).

An N-terminal signal peptide occupies residues 1–25 (MKPLVIKFAWPLPLLLLLLLPPKLQ). 3 cysteine pairs are disulfide-bonded: Cys-93–Cys-148, Cys-111–Cys-163, and Cys-118–Cys-125. Residues Asn-147 and Asn-179 are each glycosylated (N-linked (GlcNAc...) asparagine).

It belongs to the pancreatic ribonuclease family.

The protein localises to the secreted. Functionally, does not exhibit any ribonuclease activity. In Mus musculus (Mouse), this protein is Inactive ribonuclease-like protein 9 (Rnase9).